The sequence spans 442 residues: uncharacterized protein (442 aa).

The ABC transporter domain occupies 1 to 238; it reads MKAEGLSGGY…QSIKAVYDTD (238 aa). ATP is bound at residue 33–40; the sequence is GPNGSGKT.

The protein belongs to the ABC transporter superfamily. In terms of assembly, the complex is composed of two ATP-binding proteins (YvrA), two transmembrane proteins (YvrB) and a solute-binding protein (YvrC).

In terms of biological role, probably part of an ABC transporter complex. Probably responsible for energy coupling to the transport system. This is an uncharacterized protein from Bacillus subtilis (strain 168).